A 137-amino-acid polypeptide reads, in one-letter code: Large ribosomal subunit protein uL16 (137 aa).

This sequence belongs to the universal ribosomal protein uL16 family. In terms of assembly, part of the 50S ribosomal subunit.

Binds 23S rRNA and is also seen to make contacts with the A and possibly P site tRNAs. The protein is Large ribosomal subunit protein uL16 of Azorhizobium caulinodans (strain ATCC 43989 / DSM 5975 / JCM 20966 / LMG 6465 / NBRC 14845 / NCIMB 13405 / ORS 571).